A 271-amino-acid polypeptide reads, in one-letter code: Thiazole synthase (271 aa).

The active-site Schiff-base intermediate with DXP is the Lys95. 1-deoxy-D-xylulose 5-phosphate-binding positions include Gly156, 182–183, and 204–205; these read AG and NT.

Belongs to the ThiG family. In terms of assembly, homotetramer. Forms heterodimers with either ThiH or ThiS.

Its subcellular location is the cytoplasm. It carries out the reaction [ThiS sulfur-carrier protein]-C-terminal-Gly-aminoethanethioate + 2-iminoacetate + 1-deoxy-D-xylulose 5-phosphate = [ThiS sulfur-carrier protein]-C-terminal Gly-Gly + 2-[(2R,5Z)-2-carboxy-4-methylthiazol-5(2H)-ylidene]ethyl phosphate + 2 H2O + H(+). Its pathway is cofactor biosynthesis; thiamine diphosphate biosynthesis. In terms of biological role, catalyzes the rearrangement of 1-deoxy-D-xylulose 5-phosphate (DXP) to produce the thiazole phosphate moiety of thiamine. Sulfur is provided by the thiocarboxylate moiety of the carrier protein ThiS. In vitro, sulfur can be provided by H(2)S. The chain is Thiazole synthase from Shewanella amazonensis (strain ATCC BAA-1098 / SB2B).